Here is a 366-residue protein sequence, read N- to C-terminus: MKWKQQLDGMQAYKPGKPIEEVQREYGLKEVIKLASNENPFGCSPKVTAYLQNNAVNHALYPDGYAQNLRTAVANHLGVQETQLLFGNGSDDIIAIITRALLYPGVNTIMADLSFSQYWHNAEIEGAEIRKIPCVEGAHDLEAMAAAIDDQTAVIWVCSPNNPTGVVIPDTALRAFLAKVPNDVLVVLDEAYIEYVTHPEHKDTLPIIDQYPNVLLLRTFSKAYGLASFRVGYAIGQPTIIEKLDPVRGPFNNTSLSQAVAAIALSDQEYIEACREANEHGKKQYVEFCEKHNLKYFPSDTNFIFFDTKADSDVIFQELMKKGFIVRSGNALGLPGFIRVTIGTEAQNAALLVQLDNVLKEQGVFA.

Lys-222 carries the N6-(pyridoxal phosphate)lysine modification.

The protein belongs to the class-II pyridoxal-phosphate-dependent aminotransferase family. Histidinol-phosphate aminotransferase subfamily. Homodimer. It depends on pyridoxal 5'-phosphate as a cofactor.

The catalysed reaction is L-histidinol phosphate + 2-oxoglutarate = 3-(imidazol-4-yl)-2-oxopropyl phosphate + L-glutamate. It participates in amino-acid biosynthesis; L-histidine biosynthesis; L-histidine from 5-phospho-alpha-D-ribose 1-diphosphate: step 7/9. The chain is Histidinol-phosphate aminotransferase from Lysinibacillus sphaericus (strain C3-41).